A 486-amino-acid chain; its full sequence is Cobyric acid synthase (486 aa).

Residues 248–439 enclose the GATase cobBQ-type domain; the sequence is MLRVVVPVLP…VHGLFDTPAA (192 aa). The Nucleophile role is filled by Cys329. The active site involves His431.

It belongs to the CobB/CobQ family. CobQ subfamily.

Its pathway is cofactor biosynthesis; adenosylcobalamin biosynthesis. Catalyzes amidations at positions B, D, E, and G on adenosylcobyrinic A,C-diamide. NH(2) groups are provided by glutamine, and one molecule of ATP is hydrogenolyzed for each amidation. This Paraburkholderia phytofirmans (strain DSM 17436 / LMG 22146 / PsJN) (Burkholderia phytofirmans) protein is Cobyric acid synthase.